We begin with the raw amino-acid sequence, 271 residues long: Thiazole synthase (271 aa).

Catalysis depends on Lys-104, which acts as the Schiff-base intermediate with DXP. 1-deoxy-D-xylulose 5-phosphate contacts are provided by residues Gly-165, 192–193 (AG), and 214–215 (NT).

This sequence belongs to the ThiG family. As to quaternary structure, homotetramer. Forms heterodimers with either ThiH or ThiS.

The protein localises to the cytoplasm. It carries out the reaction [ThiS sulfur-carrier protein]-C-terminal-Gly-aminoethanethioate + 2-iminoacetate + 1-deoxy-D-xylulose 5-phosphate = [ThiS sulfur-carrier protein]-C-terminal Gly-Gly + 2-[(2R,5Z)-2-carboxy-4-methylthiazol-5(2H)-ylidene]ethyl phosphate + 2 H2O + H(+). The protein operates within cofactor biosynthesis; thiamine diphosphate biosynthesis. Functionally, catalyzes the rearrangement of 1-deoxy-D-xylulose 5-phosphate (DXP) to produce the thiazole phosphate moiety of thiamine. Sulfur is provided by the thiocarboxylate moiety of the carrier protein ThiS. In vitro, sulfur can be provided by H(2)S. The sequence is that of Thiazole synthase from Burkholderia thailandensis (strain ATCC 700388 / DSM 13276 / CCUG 48851 / CIP 106301 / E264).